A 98-amino-acid polypeptide reads, in one-letter code: NADH-ubiquinone oxidoreductase chain 4L (98 aa).

Helical transmembrane passes span 1-21 (MPPI…GLLM), 29-49 (SLLC…ILSL), and 61-81 (IILL…LVMI).

Belongs to the complex I subunit 4L family. Core subunit of respiratory chain NADH dehydrogenase (Complex I) which is composed of 45 different subunits.

It localises to the mitochondrion inner membrane. It carries out the reaction a ubiquinone + NADH + 5 H(+)(in) = a ubiquinol + NAD(+) + 4 H(+)(out). Its function is as follows. Core subunit of the mitochondrial membrane respiratory chain NADH dehydrogenase (Complex I) which catalyzes electron transfer from NADH through the respiratory chain, using ubiquinone as an electron acceptor. Part of the enzyme membrane arm which is embedded in the lipid bilayer and involved in proton translocation. This Galeopterus variegatus (Malayan flying lemur) protein is NADH-ubiquinone oxidoreductase chain 4L (MT-ND4L).